Consider the following 351-residue polypeptide: Tryptophan--tRNA ligase 2 (351 aa).

Residues 1-24 (MPFVDLEVPTMTTPTPAATPARPR) form a disordered region. A compositionally biased stretch (low complexity) spans 9–24 (PTMTTPTPAATPARPR). Residues 31–39 (PTGALHLGH) carry the 'HIGH' region motif. The short motif at 215–219 (KMSKS) is the 'KMSKS' region element. Lysine 218 is an ATP binding site.

The protein belongs to the class-I aminoacyl-tRNA synthetase family. In terms of assembly, homodimer. Forms a complex with nos; one homodimer of trpS2 binds one homodimer of nos.

The enzyme catalyses tRNA(Trp) + L-tryptophan + ATP = L-tryptophyl-tRNA(Trp) + AMP + diphosphate + H(+). Catalyzes the formation of 5'adenyl-Trp and tRNA(Trp) but with 5-fold less activity than TrpRS. Increases the solubility of the nitric oxide synthase oxygenase (nos), as well as its affinity for substrate L-arginine and its nitric-oxide synthase activity. The complex between trpS2 and nos catalyzes the regioselective nitration of tryptophan at the 4-position. This Deinococcus radiodurans (strain ATCC 13939 / DSM 20539 / JCM 16871 / CCUG 27074 / LMG 4051 / NBRC 15346 / NCIMB 9279 / VKM B-1422 / R1) protein is Tryptophan--tRNA ligase 2 (trpS2).